A 246-amino-acid chain; its full sequence is Probable maleylacetoacetate isomerase 1 (246 aa).

The 85-residue stretch at 32–116 folds into the GST N-terminal domain; that stretch reads TKPILYSYWP…YLEETRPQPA (85 aa). Glutathione is bound by residues 42–47, valine 88, 100–101, glutamine 140, and 144–146; these read SSCSWR, DS, and NVS. The GST C-terminal domain occupies 121 to 241; the sequence is DPVKRAKIRE…HPSTQPDCPP (121 aa).

It belongs to the GST superfamily. Zeta family. Requires glutathione as cofactor.

The protein localises to the cytoplasm. The catalysed reaction is 4-maleylacetoacetate = 4-fumarylacetoacetate. It catalyses the reaction RX + glutathione = an S-substituted glutathione + a halide anion + H(+). It functions in the pathway amino-acid degradation; L-phenylalanine degradation; acetoacetate and fumarate from L-phenylalanine: step 5/6. Functionally, catalyzes the glutathione dependent oxygenation of dichloroacetic acid to glyoxylic acid in vitro. Possesses low glutathione thioltransferase activity toward 4-hydroxynonenal (4-HNE). Has no glutathione thioltransferase activity with adrenochrome, phenethyl isothiocyanate (PEITC), 5-hydroperoxyeicosatetraenoic acid ((5S)-HpETE), prostaglandin A2 (PGA2) or 2-hydroxyethyldisulfide (HED). The sequence is that of Probable maleylacetoacetate isomerase 1 (GstZ1) from Drosophila melanogaster (Fruit fly).